A 2562-amino-acid chain; its full sequence is MATLNSASPSGTVPSPGHNVRSPPPETSSSSTSDPVTKDPPDAPSTSESIRSSEPGGERLESGSDLDPPKEIGEPQEEPGCGHIPPKDLGVAKEEEEILPLDLSSHLFFAAGGQAYLLANLPLPRGSELSLPKGFPWDEASAKEEPSLPLLTHFPSSHLTTLHIQHGFDPIQGFSSSDQMLSHDTSAPSLAACERRDGSFWSYQLVPNPTEDPKDGPLGSRREDHRAMFWICLLCRLGFGRLQTFIGHTLSHGVKLSPAHHQGLLGSPAVLQEGHDGGMALLSFLEPKFLTRPSPEVPDTSTVTVKTNGAQAEDGPPEADGQALVLPAEEVIALSPPSPPTALATWDPSPTQAKDSPVPRGEAGPDWFPEGQEEDGGLCLPLNQSSPTSKEVAVLPAPAGSPEDTSDPPPSCRLADDYTPAPAAFQGLSLSSHMSLLHSRNSCKTLKCPKCNWHYKYQQTLDVHMREKHPESNSHCSYCSAGGAHPRLARGESYNCGYKPYRCDVCNYSTTTKGNLSIHMQSDKHLANLQGFQAGPGGQASPPEASLPPTSVGDKEPKTKSSWQCKVCSYETNISRNLRIHMTSEKHMQNVLMLHQGLPLGLPPGLVGPGPPPPPGAAPTNPPELFQYFGPQALGQPQTPMPGPGLRPDKPLEAQLLLNGFHHLGAPARKFPTAAPGSLSPETHLPPSQLLGSSSDGLPTSPSPDDSPALKVFRCLVCQAFSTDSLELLLYHCSIGRSLPEAEWKEVAGDTHRCKLCCYGTQLKANFQLHLKTDKHTQKYQLAAHLREGGGAMGTPSLLALGDGASYGSISPLHLRCNICDFESNSKEKMQLHTRGSAHEENSQIYKFLLEMEGAEAGPEPGLYHCLLCAWDTPSRLALLQHLRTPAHRDAQAQRRLQLLQNGPAAEEGLSALQSILSFSHGRLQTPGKASDTPLAQPPTSEKDAQNKTEQQASEVTEDRSGPPRDSANQITVFCCPYCSFLSPECDQVRVHTLSQHAVQPKYRCPLCQEQLVGRPALHFHLSHLHNVVPECVEKLLLVATTVEMTFATKMLPGPTLNPVEDGLDHPAPGAEPTPNRDQVAESSNLAPEVSPDPPLEPPLAPVEGSREPSESPDQPPSPAPSPAPRLDAQVEELAPLPTMSEEEEGAMGEPRSAEPTPADSRHPLTYRKTTNFALDKFLDPARPYKCTVCKESFTQKNILLVHYNSVSHLHKMKKAAIDPSGPARGEAGIPPPAATASDKPFKCTVCRVSYNQSSTLEIHMRSVLHQTRSRGAKIDARAEGAERGQEEFKEGETEGEAGTEKKGPDPGGFMSGLPFLSPPPPPLDLHRFSAPLFTPPVLPPFPLVPESLLKLQQQQLLLPFYLHDLKVGPKLALASPTPMLSLPAANPPPLPAPPKAELAEQEWERPLMAEEGTEAGPSSPTHTSPNEAARTAAKALLENFGFELVIQYNEGKQAVPPPPTPPPPESLGGGDKLACGACGKLFSNMLILKTHEEHVHRRFLPFEALSRYAAQFRKSYDSLYPPPVEPPKPPDGCLESPPQLGPPFVVPEPEVGGIHTSEERSLSGGGPWPSEEEEGSRGSLPPAVPVGRRFSRTKFTEFQTQALQSFFETSAYPKDGEVERLASLLGLASRVVVVWFQNARQKARKNACEGGPVTAGGASGGASGCRRCHATFACVFELVRHLKKCYDDQPPEEEEEAERGEEEEEVEEEEAEERNLEPAAARPGGPSPEHADGEDLSQTEPTRPESKESEGKAPPSPPVYACDQCAASFPSQDLLTTHHRLHLLPSVQPSAPPPSQLLDLPLLVFGERNPVVSGTSSVTGTPLKRKHDDGSLSPTGSEAGGGGEGEPPKDKRLRTTILPEQLEILYRWYMQDSNPTRKMLDCISEEVGLKKRVVQVWFQNTRARERKGQFRSTPGGVAGPAVKPTVPPSPAPFPKFNLLLSKIEDETGKEAPKRDAPAFPYPTVTPAVGPLPFLPPGKEAAVPTPEPPPPLPPPALSEDEGPEEPSKASPESEACSPSAGDLSDSSASSLAEPESPGAGGTSGGPGGGTGVPDSMGQRRYRTQMSSLQLKIMKACYEAYRTPTMQECEVLGEEIGLPKRVIQVWFQNARAKEKKAKLQGTAPPGSGGSSEGTSAAQRTDCPYCDVKYDFYVSCRGHLFSRQHLAKLKEAVRAQLKSESKCYDLAPAPETPLAPKGPPATTPASSVPLGASPTLPRLAPVLLPGPTLAQPPLGSIASFNSGPAASSGLLGLATSVLPATTVVQTAGPGRPLPQRPVSNQTNSSTDPTPGPATEPSGDKVSGERKPVATLPNSSTDALKNLKALKATVPALLGGQFLPFPLPPAGGAAPPAVFGPQLQGAYFQQLYGMKKGLFPMNPVIPQTLIGLLPNALLQQPPQAPEPTATAPPKPPELPASGEGESSEADELLTGSTGISTVDVTHRYLCRQCKMAFDGEAPATAHQRSFCFFGRGSGASMPAPLRVPICTYHCLACEVLLSGREALASHLRSSAHRRKAAPPPGGPPITVTNSATAVPAAVAFAKEEARLPHTDPNPKTTTTSTLLAL.

Positions 1–13 are enriched in polar residues; the sequence is MATLNSASPSGTV. 2 disordered regions span residues 1–88 and 337–410; these read MATL…PPKD and PSPP…DPPP. Residues 56-73 show a composition bias toward basic and acidic residues; the sequence is GGERLESGSDLDPPKEIG. C2H2-type zinc fingers lie at residues 446–469 and 501–525; these read LKCP…REKH and YRCD…SDKH. Disordered stretches follow at residues 530–559, 603–651, and 669–705; these read QGFQ…EPKT, PPGL…PDKP, and RKFP…PSPD. Residues 609–622 are compositionally biased toward pro residues; it reads PGPPPPPGAAPTNP. Residues 690-704 show a composition bias toward polar residues; that stretch reads LLGSSSDGLPTSPSP. 3 consecutive C2H2-type zinc fingers follow at residues 752-776, 815-839, and 864-888; these read HRCK…TDKH, LRCN…GSAH, and YHCL…TPAH. A disordered region spans residues 923-966; sequence RLQTPGKASDTPLAQPPTSEKDAQNKTEQQASEVTEDRSGPPRD. The segment at 1003–1026 adopts a C2H2-type 6 zinc-finger fold; the sequence is YRCPLCQEQLVGRPALHFHLSHLH. 2 disordered regions span residues 1058–1126 and 1140–1166; these read NPVE…PAPR and MSEE…HPLT. Composition is skewed to pro residues over residues 1091–1101 and 1114–1124; these read SPDPPLEPPLA and DQPPSPAPSPA. 2 consecutive C2H2-type zinc fingers follow at residues 1185–1211 and 1242–1266; these read YKCT…SHLH and FKCT…SVLH. Basic and acidic residues predominate over residues 1278 to 1305; that stretch reads RAEGAERGQEEFKEGETEGEAGTEKKGP. The tract at residues 1278–1313 is disordered; it reads RAEGAERGQEEFKEGETEGEAGTEKKGPDPGGFMSG. Residues 1474-1497 form a C2H2-type 9 zinc finger; that stretch reads LACGACGKLFSNMLILKTHEEHVH. The disordered stretch occupies residues 1520–1584; that stretch reads LYPPPVEPPK…EGSRGSLPPA (65 aa). Pro residues predominate over residues 1521-1531; that stretch reads YPPPVEPPKPP. Positions 1589-1648 form a DNA-binding region, homeobox 1; the sequence is RRFSRTKFTEFQTQALQSFFETSAYPKDGEVERLASLLGLASRVVVVWFQNARQKARKNA. Residues 1664 to 1687 form a C2H2-type 10; degenerate zinc finger; it reads SGCRRCHATFACVFELVRHLKKCY. The segment at 1689 to 1760 is disordered; sequence DQPPEEEEEA…EGKAPPSPPV (72 aa). Residues 1690 to 1713 show a composition bias toward acidic residues; sequence QPPEEEEEAERGEEEEEVEEEEAE. Residues 1743 to 1752 are compositionally biased toward basic and acidic residues; that stretch reads TRPESKESEG. A C2H2-type 11 zinc finger spans residues 1761 to 1783; it reads YACDQCAASFPSQDLLTTHHRLH. 7 disordered regions span residues 1814–1853, 1907–1934, 1971–2057, 2114–2136, 2186–2210, 2263–2313, and 2391–2429; these read SGTS…KDKR, RKGQ…PAPF, PLPF…DSMG, KKAK…TSAA, PAPE…PLGA, QTAG…PNSS, and LQQP…LTGS. The homeobox 2 DNA-binding region spans 1851 to 1910; that stretch reads DKRLRTTILPEQLEILYRWYMQDSNPTRKMLDCISEEVGLKKRVVQVWFQNTRARERKGQ. Over residues 1985–1996 the composition is skewed to pro residues; it reads TPEPPPPLPPPA. A compositionally biased stretch (low complexity) spans 2008–2037; the sequence is KASPESEACSPSAGDLSDSSASSLAEPESP. Positions 2038–2051 are enriched in gly residues; that stretch reads GAGGTSGGPGGGTG. Residues 2058–2117 constitute a DNA-binding region (homeobox 3); sequence QRRYRTQMSSLQLKIMKACYEAYRTPTMQECEVLGEEIGLPKRVIQVWFQNARAKEKKAK. Pro residues predominate over residues 2188–2200; it reads PETPLAPKGPPAT. Positions 2275–2286 are enriched in polar residues; it reads PVSNQTNSSTDP. Over residues 2295–2305 the composition is skewed to basic and acidic residues; sequence SGDKVSGERKP. Residues 2395 to 2411 are compositionally biased toward pro residues; the sequence is PQAPEPTATAPPKPPEL. A C2H2-type 12; degenerate zinc finger spans residues 2441–2461; that stretch reads YLCRQCKMAFDGEAPATAHQR. The C2H2-type 13 zinc finger occupies 2485-2509; that stretch reads YHCLACEVLLSGREALASHLRSSAH. Disordered regions lie at residues 2506–2525 and 2540–2562; these read SSAH…ITVT and EEAR…LLAL. Over residues 2553 to 2562 the composition is skewed to low complexity; sequence TTTTSTLLAL.

Expressed in brain (at protein level). Expressed at the highest levels in the pyramidal cell layer of the hippocampus, the suprachiasmatic nucleus, laterodorsal thalamic nucleus, lateral geniculate nucleus, substantia nigra pars compacta, and magnocellular part of the red nucleus (at protein level). Highly expressed in dorsal root ganglia. Expressed at lower levels in kidney, stomach, liver, heart and testis.

It localises to the nucleus. Its function is as follows. Transcriptional regulator that is critical for the regulation of pain perception and processing of noxious stimuli. The protein is Zinc finger homeobox protein 2 of Mus musculus (Mouse).